We begin with the raw amino-acid sequence, 209 residues long: Mitochondrial import inner membrane translocase subunit Tim23 (209 aa).

3 consecutive transmembrane segments (helical) span residues 73 to 93 (FELAFFTIGGCCMTGAAFGAM), 125 to 145 (ALWANTLGSLALLYSAFGVII), and 181 to 197 (GLTGLTLTSLYALYNNW).

This sequence belongs to the Tim17/Tim22/Tim23 family. In terms of assembly, component of the TIM23 complex at least composed of TIMM23, TIMM17 (TIMM17A or TIMM17B) and TIMM50; within this complex, directly interacts with TIMM50. The complex interacts with the TIMM44 component of the PAM complex and with DNAJC15. Upon mitochondrial depolarization, interacts with PINK1; the interaction is required for PINK1 accumulation at the outer mitochondrial membrane, kinase activation by autophosphorylation and PRKN recruitement to mitochondria.

The protein resides in the mitochondrion inner membrane. In terms of biological role, essential component of the TIM23 complex, a complex that mediates the translocation of transit peptide-containing proteins across the mitochondrial inner membrane. Has a role in the activation of stress-induced mitophagy by protecting PINK1 from OMA1-mediated degradation and facilitating its accumulation at the outer mitochondrial membrane in response to depolarization. In Homo sapiens (Human), this protein is Mitochondrial import inner membrane translocase subunit Tim23 (TIMM23).